A 309-amino-acid chain; its full sequence is MLALRGRRGKRVRYPADGVAEADEAFVLPRPLRRGVRFLISLGAGRIRFPNHTGTVAAAAFMVATGLYGMSLGGHTQSFAQVSTTAAGFAIEDVRVSGNAQTSEIDILQQLGLDGTTSLVALDIEEARRLIGELPWVETVTVRKVYPGTIEVVLKEREAFGIWQHGSDLSLIERSGSVIAPLRDNKFASLPLFVGRDAETAAAAFYDEFSRWPEFRSRVKAFVRVAGRRWDLRLNNGVVVKLPEKDVARAMSVLAGMQDTHQLLERDIAAVDLRLEDRTTVQLTPEAVKRREVALKAREKMLKAQEKRI.

Over methionine 1 to histidine 52 the chain is Cytoplasmic. Residues threonine 53 to glycine 74 traverse the membrane as a helical segment. Residues histidine 75–isoleucine 309 lie on the Periplasmic side of the membrane. Positions phenylalanine 89–arginine 157 constitute a POTRA domain.

Belongs to the FtsQ/DivIB family. FtsQ subfamily.

The protein resides in the cell inner membrane. In terms of biological role, essential cell division protein. The polypeptide is Cell division protein FtsQ (Rhizobium meliloti (strain 1021) (Ensifer meliloti)).